The primary structure comprises 370 residues: Leucine-rich repeat and transmembrane domain-containing protein 2 (370 aa).

Residues 1-35 (MLAPGSSPGQRGRLALQWRQVSWITCWIALYAVEA) form the signal peptide. The 33-residue stretch at 36–68 (LPTCPFSCKCDSRSLEVDCSGLGLTTVPPDVPA) folds into the LRRNT domain. The Extracellular segment spans residues 36–310 (LPTCPFSCKC…PASVRRAMGT (275 aa)). 5 LRR repeats span residues 69–90 (ATRT…AFAN), 93–114 (SLQR…IFGD), 117–139 (NLTE…LRHS), 141–162 (LLRH…LFDG), and 165–186 (ALRS…TFEP). An N-linked (GlcNAc...) asparagine glycan is attached at Asn90. 2 N-linked (GlcNAc...) asparagine glycosylation sites follow: Asn117 and Asn125. An LRRCT domain is found at 198–252 (NPWECDCNLREFKHWMEWFSYRGGRLDQLACTLPKELRGKDMRMVPMEMFNYCSQ). Residue Asn257 is glycosylated (N-linked (GlcNAc...) asparagine). Residues 261–300 (GLDIPGPPCTKASPEPAKPKPGAEPEPEPSTACPQKQRHR) are disordered. The helical transmembrane segment at 311–331 (VIIAGVVCGVVCIMMVVAAAY) threads the bilayer. Over 332-370 (GCIYASLMAKYHRELKKRQPLMGDPEGEHEDQKQISSVA) the chain is Cytoplasmic. The interval 351 to 370 (PLMGDPEGEHEDQKQISSVA) is disordered.

The protein resides in the membrane. In Homo sapiens (Human), this protein is Leucine-rich repeat and transmembrane domain-containing protein 2 (LRTM2).